Consider the following 488-residue polypeptide: 3-octaprenyl-4-hydroxybenzoate carboxy-lyase (488 aa).

Residue N172 participates in Mn(2+) binding. Prenylated FMN-binding positions include 175–177, 189–191, and 194–195; these read IYR, RWL, and RG. E238 contacts Mn(2+). D287 acts as the Proton donor in catalysis.

Belongs to the UbiD family. In terms of assembly, homohexamer. Prenylated FMN serves as cofactor. Mn(2+) is required as a cofactor.

It is found in the cell membrane. It catalyses the reaction a 4-hydroxy-3-(all-trans-polyprenyl)benzoate + H(+) = a 2-(all-trans-polyprenyl)phenol + CO2. It participates in cofactor biosynthesis; ubiquinone biosynthesis. Functionally, catalyzes the decarboxylation of 3-octaprenyl-4-hydroxy benzoate to 2-octaprenylphenol, an intermediate step in ubiquinone biosynthesis. The sequence is that of 3-octaprenyl-4-hydroxybenzoate carboxy-lyase from Shewanella oneidensis (strain ATCC 700550 / JCM 31522 / CIP 106686 / LMG 19005 / NCIMB 14063 / MR-1).